We begin with the raw amino-acid sequence, 209 residues long: Glutathione S-transferase 1-1 (209 aa).

The GST N-terminal domain maps to 1-81 (MADFYYLPGS…YLVEKYGKTD (81 aa)). Glutathione is bound by residues 51–53 (HTI) and 65–67 (ESR). The GST C-terminal domain maps to 87 to 209 (CPKKRAVINQ…GCLEFKKYFE (123 aa)).

It belongs to the GST superfamily. Theta family. As to quaternary structure, homodimer.

The enzyme catalyses RX + glutathione = an S-substituted glutathione + a halide anion + H(+). Functionally, conjugation of reduced glutathione to a wide number of exogenous and endogenous hydrophobic electrophiles. The chain is Glutathione S-transferase 1-1 (GstD1) from Drosophila yakuba (Fruit fly).